Consider the following 382-residue polypeptide: Putative NADPH dehydrogenase C5H10.04 (382 aa).

Positions 28 and 189 each coordinate FMN. 2 residues coordinate substrate: His-189 and Asn-192. Residues Arg-242 and Arg-334 each coordinate FMN. A substrate-binding site is contributed by Tyr-361.

It belongs to the NADH:flavin oxidoreductase/NADH oxidase family. In terms of assembly, homodimer or heterodimer. Requires FMN as cofactor.

The enzyme catalyses A + NADPH + H(+) = AH2 + NADP(+). The chain is Putative NADPH dehydrogenase C5H10.04 from Schizosaccharomyces pombe (strain 972 / ATCC 24843) (Fission yeast).